The primary structure comprises 66 residues: Large ribosomal subunit protein uL29 (66 aa).

This sequence belongs to the universal ribosomal protein uL29 family.

The polypeptide is Large ribosomal subunit protein uL29 (Bartonella quintana (strain Toulouse) (Rochalimaea quintana)).